Consider the following 711-residue polypeptide: Cyclomaltodextrin glucanotransferase (711 aa).

Positions 1–31 (MRRWLSLVLSMSFVFSAIFIVSDTQKVTVEA) are cleaved as a signal peptide. The tract at residues 32-165 (AGNLNKVNFT…GIKVIIDFAP (134 aa)) is A1. The Ca(2+) site is built by Asp55, Asn57, Asn60, and Asn61. A disulfide bond links Cys71 and Cys78. Ca(2+) is bound by residues Gly79 and Asp81. Position 127–128 (127–128 (YW)) interacts with substrate. Asn166 provides a ligand contact to Ca(2+). The segment at 166–229 (NHTSPASETN…NLFDLADLNH (64 aa)) is b. Substrate is bound at residue His167. Ile217 serves as a coordination point for Ca(2+). 220–223 (NLFD) is a substrate binding site. Residue Asp226 coordinates Ca(2+). Positions 230-433 (QNPVIDRYLK…LRRNNPALAY (204 aa)) are A2. Residue Arg254 coordinates substrate. The Nucleophile role is filled by Asp256. 259–260 (KH) contributes to the substrate binding site. His260 is a binding site for Ca(2+). Glu284 acts as the Proton donor in catalysis. The substrate site is built by His354, Asp398, and Arg402. The c stretch occupies residues 434-522 (GDTEQRWING…EVGVWAYSAT (89 aa)). The interval 523–606 (ESTPIIGHVG…SAAYDNFEVL (84 aa)) is d. In terms of domain architecture, IPT/TIG spans 526-604 (PIIGHVGPMM…QTSAAYDNFE (79 aa)). One can recognise a CBM20 domain in the interval 605–711 (VLTNDQVSVR…TGKIIVDWQN (107 aa)). The e stretch occupies residues 607–711 (TNDQVSVRFV…TGKIIVDWQN (105 aa)).

Belongs to the glycosyl hydrolase 13 family. In terms of assembly, monomer. Ca(2+) serves as cofactor.

Its subcellular location is the secreted. It carries out the reaction Cyclizes part of a (1-&gt;4)-alpha-D-glucan chain by formation of a (1-&gt;4)-alpha-D-glucosidic bond.. The chain is Cyclomaltodextrin glucanotransferase (cgt) from Geobacillus stearothermophilus (Bacillus stearothermophilus).